The chain runs to 613 residues: Phosphoinositide phospholipase C 6 (613 aa).

Residues 137–281 (QDMTAPLSHY…LLHRIIISTK (145 aa)) enclose the PI-PLC X-box domain. Active-site residues include histidine 152 and histidine 198. Residues 288 to 349 (ESRNPIVKQK…ASEDQKPAYK (62 aa)) form a disordered region. Positions 349 to 465 (KRLITIHAGK…GYVKKPNFLM (117 aa)) constitute a PI-PLC Y-box domain. One can recognise a C2 domain in the interval 466–595 (KKGFHDEVFD…PGIRSVPLYD (130 aa)).

Requires Ca(2+) as cofactor. As to expression, expressed in leaves, flowers and siliques, but not in roots.

It is found in the cell membrane. The enzyme catalyses a 1,2-diacyl-sn-glycero-3-phospho-(1D-myo-inositol-4,5-bisphosphate) + H2O = 1D-myo-inositol 1,4,5-trisphosphate + a 1,2-diacyl-sn-glycerol + H(+). Its function is as follows. The production of the second messenger molecules diacylglycerol (DAG) and inositol 1,4,5-trisphosphate (IP3) is mediated by activated phosphatidylinositol-specific phospholipase C enzymes. The chain is Phosphoinositide phospholipase C 6 (PLC6) from Arabidopsis thaliana (Mouse-ear cress).